A 120-amino-acid chain; its full sequence is Large ribosomal subunit protein bL19 (120 aa).

Belongs to the bacterial ribosomal protein bL19 family.

This protein is located at the 30S-50S ribosomal subunit interface and may play a role in the structure and function of the aminoacyl-tRNA binding site. This Picosynechococcus sp. (strain ATCC 27264 / PCC 7002 / PR-6) (Agmenellum quadruplicatum) protein is Large ribosomal subunit protein bL19.